The primary structure comprises 436 residues: ATP-sensitive inward rectifier potassium channel 14 (436 aa).

Over 1–83 (MGLARALRRL…LSDLFTTCVD (83 aa)) the chain is Cytoplasmic. Positions 14–43 (LDSGDSRAGDEEEAGPGLCRNGWAPAPVQS) are disordered. An S-nitrosocysteine modification is found at C81. The helical transmembrane segment at 84 to 110 (VRWRWMCLLFSCSFLASWLLFGLAFWL) threads the bilayer. The Extracellular segment spans residues 111–133 (IASLHGDLAAPPPPAPCFSHVAS). Residues 134 to 150 (FLAAFLFALETQTSIGY) constitute an intramembrane region (helical; Pore-forming). The short motif at 147-152 (SIGYGV) is the Selectivity filter element. The Extracellular segment spans residues 151 to 159 (GVRSVTEEC). A helical membrane pass occupies residues 160 to 187 (PAAVAAVVLQCIAGCVLDAFVVGAVMAK). The Cytoplasmic segment spans residues 188–436 (MAKPKKRNET…TPTLALTLPP (249 aa)). Over residues 400–418 (QEEDEDDETEEGNGVETED) the composition is skewed to acidic residues. Residues 400-436 (QEEDEDDETEEGNGVETEDGAASPRVLTPTLALTLPP) form a disordered region. Positions 426 to 436 (LTPTLALTLPP) are enriched in low complexity.

Belongs to the inward rectifier-type potassium channel (TC 1.A.2.1) family. KCNJ14 subfamily. Expressed preferentially in retina.

It is found in the membrane. It carries out the reaction K(+)(in) = K(+)(out). Channel activity is regulated by variations of cytosolic pH; channels are activated by alkaline and inhibited by acidic pH values. Inhibited by Ba(2+) and Cs(+) in a voltage-dependent manner; sensitivity to those inhibitors is lower than in other Kir channels. Its function is as follows. Inward rectifier potassium channels are characterized by a greater tendency to allow potassium to flow into the cell rather than out of it. Their voltage dependence is regulated by the concentration of extracellular potassium; as external potassium is raised, the voltage range of the channel opening shifts to more positive voltages. The chain is ATP-sensitive inward rectifier potassium channel 14 (KCNJ14) from Homo sapiens (Human).